A 422-amino-acid polypeptide reads, in one-letter code: Serine hydroxymethyltransferase (422 aa).

(6S)-5,6,7,8-tetrahydrofolate is bound by residues Leu-121 and 125–127 (GHL). Lys-230 carries the N6-(pyridoxal phosphate)lysine modification. 355-357 (SPF) provides a ligand contact to (6S)-5,6,7,8-tetrahydrofolate.

The protein belongs to the SHMT family. Homodimer. Requires pyridoxal 5'-phosphate as cofactor.

The protein localises to the cytoplasm. The catalysed reaction is (6R)-5,10-methylene-5,6,7,8-tetrahydrofolate + glycine + H2O = (6S)-5,6,7,8-tetrahydrofolate + L-serine. It participates in one-carbon metabolism; tetrahydrofolate interconversion. The protein operates within amino-acid biosynthesis; glycine biosynthesis; glycine from L-serine: step 1/1. In terms of biological role, catalyzes the reversible interconversion of serine and glycine with tetrahydrofolate (THF) serving as the one-carbon carrier. This reaction serves as the major source of one-carbon groups required for the biosynthesis of purines, thymidylate, methionine, and other important biomolecules. Also exhibits THF-independent aldolase activity toward beta-hydroxyamino acids, producing glycine and aldehydes, via a retro-aldol mechanism. This is Serine hydroxymethyltransferase from Teredinibacter turnerae (strain ATCC 39867 / T7901).